The primary structure comprises 103 residues: Integration host factor subunit beta (103 aa).

This sequence belongs to the bacterial histone-like protein family. Heterodimer of an alpha and a beta chain.

This protein is one of the two subunits of integration host factor, a specific DNA-binding protein that functions in genetic recombination as well as in transcriptional and translational control. This is Integration host factor subunit beta from Rhizobium meliloti (strain 1021) (Ensifer meliloti).